The following is a 245-amino-acid chain: tRNA pseudouridine synthase A (245 aa).

The active-site Nucleophile is Asp-52. Tyr-111 is a substrate binding site.

Belongs to the tRNA pseudouridine synthase TruA family. In terms of assembly, homodimer.

It catalyses the reaction uridine(38/39/40) in tRNA = pseudouridine(38/39/40) in tRNA. Its function is as follows. Formation of pseudouridine at positions 38, 39 and 40 in the anticodon stem and loop of transfer RNAs. The chain is tRNA pseudouridine synthase A from Bradyrhizobium sp. (strain BTAi1 / ATCC BAA-1182).